The primary structure comprises 516 residues: 1-pyrroline-5-carboxylate dehydrogenase (516 aa).

Catalysis depends on residues Glu-287 and Cys-321.

It belongs to the aldehyde dehydrogenase family. RocA subfamily.

It carries out the reaction L-glutamate 5-semialdehyde + NAD(+) + H2O = L-glutamate + NADH + 2 H(+). The protein operates within amino-acid degradation; L-proline degradation into L-glutamate; L-glutamate from L-proline: step 2/2. This chain is 1-pyrroline-5-carboxylate dehydrogenase, found in Bacillus licheniformis (strain ATCC 14580 / DSM 13 / JCM 2505 / CCUG 7422 / NBRC 12200 / NCIMB 9375 / NCTC 10341 / NRRL NRS-1264 / Gibson 46).